We begin with the raw amino-acid sequence, 1085 residues long: Translation factor GUF1 homolog, mitochondrial (1085 aa).

The tr-type G domain occupies 232-409 (KYIRNFCILA…RIISDIPPPI (178 aa)). Residues 241–248 (AHIDSGKS), 302–306 (DTPGH), and 356–359 (NKID) contribute to the GTP site.

The protein belongs to the TRAFAC class translation factor GTPase superfamily. Classic translation factor GTPase family. LepA subfamily.

It is found in the mitochondrion inner membrane. It carries out the reaction GTP + H2O = GDP + phosphate + H(+). In terms of biological role, promotes mitochondrial protein synthesis. May act as a fidelity factor of the translation reaction, by catalyzing a one-codon backward translocation of tRNAs on improperly translocated ribosomes. Binds to mitochondrial ribosomes in a GTP-dependent manner. The polypeptide is Translation factor GUF1 homolog, mitochondrial (Plasmodium falciparum (isolate 3D7)).